Consider the following 249-residue polypeptide: NADH dehydrogenase [ubiquinone] flavoprotein 2, mitochondrial (249 aa).

The N-terminal 32 residues, 1–32 (MFFSAALRARAAGLTAQWGRHVRNLHKTAMQN), are a transit peptide targeting the mitochondrion. An N6-acetyllysine modification is found at lysine 61. The [2Fe-2S] cluster site is built by cysteine 135, cysteine 140, cysteine 176, and cysteine 180. Tyrosine 193 is modified (phosphotyrosine; by SRC). The segment at 213-249 (IPKPGPRSGRFSCEPAGGLTSLTEPPKGPGFGVQAGL) is disordered.

The protein belongs to the complex I 24 kDa subunit family. As to quaternary structure, core subunit of respiratory chain NADH dehydrogenase (Complex I) which is composed of 45 different subunits. This is a component of the flavoprotein-sulfur (FP) fragment of the enzyme. Requires [2Fe-2S] cluster as cofactor.

The protein resides in the mitochondrion inner membrane. It catalyses the reaction a ubiquinone + NADH + 5 H(+)(in) = a ubiquinol + NAD(+) + 4 H(+)(out). Core subunit of the mitochondrial membrane respiratory chain NADH dehydrogenase (Complex I) which catalyzes electron transfer from NADH through the respiratory chain, using ubiquinone as an electron acceptor. Parts of the peripheral arm of the enzyme, where the electrons from NADH are accepted by flavin mononucleotide (FMN) and then passed along a chain of iron-sulfur clusters by electron tunnelling to the final acceptor ubiquinone. Contains one iron-sulfur cluster. This chain is NADH dehydrogenase [ubiquinone] flavoprotein 2, mitochondrial, found in Gorilla gorilla gorilla (Western lowland gorilla).